We begin with the raw amino-acid sequence, 244 residues long: Acetylglutamate kinase (244 aa).

Residues 40–41, R62, and N155 each bind substrate; that span reads GG.

The protein belongs to the acetylglutamate kinase family. ArgB subfamily.

It is found in the cytoplasm. It catalyses the reaction N-acetyl-L-glutamate + ATP = N-acetyl-L-glutamyl 5-phosphate + ADP. It participates in amino-acid biosynthesis; L-arginine biosynthesis; N(2)-acetyl-L-ornithine from L-glutamate: step 2/4. Catalyzes the ATP-dependent phosphorylation of N-acetyl-L-glutamate. The sequence is that of Acetylglutamate kinase from Leuconostoc mesenteroides subsp. mesenteroides (strain ATCC 8293 / DSM 20343 / BCRC 11652 / CCM 1803 / JCM 6124 / NCDO 523 / NBRC 100496 / NCIMB 8023 / NCTC 12954 / NRRL B-1118 / 37Y).